We begin with the raw amino-acid sequence, 910 residues long: Protein translocase subunit SecA (910 aa).

Residues Q87, 105–109, and D508 contribute to the ATP site; that span reads GEGKT. The interval 848 to 910 is disordered; it reads RLSQSQFQHQ…KYKHCHGQLS (63 aa). The span at 869-880 shows a compositional bias: low complexity; sequence AQVQAAQQGVAQ. C894, C896, C905, and H906 together coordinate Zn(2+). A compositionally biased stretch (basic residues) spans 900 to 910; sequence KKYKHCHGQLS.

Belongs to the SecA family. As to quaternary structure, monomer and homodimer. Part of the essential Sec protein translocation apparatus which comprises SecA, SecYEG and auxiliary proteins SecDF-YajC and YidC. The cofactor is Zn(2+).

The protein resides in the cell inner membrane. It localises to the cytoplasm. It catalyses the reaction ATP + H2O + cellular proteinSide 1 = ADP + phosphate + cellular proteinSide 2.. Its function is as follows. Part of the Sec protein translocase complex. Interacts with the SecYEG preprotein conducting channel. Has a central role in coupling the hydrolysis of ATP to the transfer of proteins into and across the cell membrane, serving both as a receptor for the preprotein-SecB complex and as an ATP-driven molecular motor driving the stepwise translocation of polypeptide chains across the membrane. The chain is Protein translocase subunit SecA from Stenotrophomonas maltophilia (strain K279a).